Reading from the N-terminus, the 347-residue chain is UDP-N-acetylenolpyruvoylglucosamine reductase (347 aa).

One can recognise an FAD-binding PCMH-type domain in the interval 24–195 (FDARARVAAR…VAVTFRLPKA (172 aa)). R171 is a catalytic residue. The Proton donor role is filled by S247. The active site involves E343.

This sequence belongs to the MurB family. The cofactor is FAD.

The protein localises to the cytoplasm. It carries out the reaction UDP-N-acetyl-alpha-D-muramate + NADP(+) = UDP-N-acetyl-3-O-(1-carboxyvinyl)-alpha-D-glucosamine + NADPH + H(+). It participates in cell wall biogenesis; peptidoglycan biosynthesis. In terms of biological role, cell wall formation. In Burkholderia mallei (strain NCTC 10247), this protein is UDP-N-acetylenolpyruvoylglucosamine reductase.